A 477-amino-acid chain; its full sequence is Argininosuccinate lyase (477 aa).

It belongs to the lyase 1 family. Argininosuccinate lyase subfamily.

The protein localises to the cytoplasm. The catalysed reaction is 2-(N(omega)-L-arginino)succinate = fumarate + L-arginine. Its pathway is amino-acid biosynthesis; L-arginine biosynthesis; L-arginine from L-ornithine and carbamoyl phosphate: step 3/3. This is Argininosuccinate lyase from Corynebacterium efficiens (strain DSM 44549 / YS-314 / AJ 12310 / JCM 11189 / NBRC 100395).